The following is a 253-amino-acid chain: Glutamate racemase (253 aa).

Residues aspartate 7 to serine 8 and tyrosine 39 to glycine 40 contribute to the substrate site. Cysteine 70 (proton donor/acceptor) is an active-site residue. Asparagine 71–threonine 72 lines the substrate pocket. The Proton donor/acceptor role is filled by cysteine 180. Substrate is bound at residue threonine 181–histidine 182.

The protein belongs to the aspartate/glutamate racemases family.

The catalysed reaction is L-glutamate = D-glutamate. The protein operates within cell wall biogenesis; peptidoglycan biosynthesis. Provides the (R)-glutamate required for cell wall biosynthesis. The protein is Glutamate racemase of Halothermothrix orenii (strain H 168 / OCM 544 / DSM 9562).